A 355-amino-acid chain; its full sequence is Hydroxylysine kinase (355 aa).

D215 functions as the Proton acceptor in the catalytic mechanism.

Belongs to the aminoglycoside phosphotransferase family.

Its subcellular location is the cytoplasm. It catalyses the reaction (5R)-5-hydroxy-L-lysine + GTP = (5R)-5-phosphooxy-L-lysine + GDP + H(+). Catalyzes the GTP-dependent phosphorylation of 5-hydroxy-L-lysine. The polypeptide is Hydroxylysine kinase (hykk) (Danio rerio (Zebrafish)).